The following is a 118-amino-acid chain: LYR motif containing protein 1 (118 aa).

Residues 91 to 118 (TQKGRKLRAQQRLRKQAKPVYLQSQDET) form a disordered region. Positions 93-107 (KGRKLRAQQRLRKQA) are enriched in basic residues.

Belongs to the complex I LYR family.

This is LYR motif containing protein 1 (lyrm1) from Danio rerio (Zebrafish).